A 311-amino-acid chain; its full sequence is Retinol dehydrogenase 8 (311 aa).

NADP(+) is bound at residue 9–18; the sequence is LISGCSSGIG. 3 helical membrane-spanning segments follow: residues 86 to 106, 137 to 157, and 169 to 189; these read VLVNNAGMGLVGPLEGLSLAA, IVVISSVMGLQGVIFNDVYAA, and LAIQLLQFNIFISLVEPGPVV. S142 lines the substrate pocket. Catalysis depends on Y155, which acts as the Proton acceptor.

Belongs to the short-chain dehydrogenases/reductases (SDR) family. Detected in photoreceptor outer segments in the retina (at protein level).

It is found in the membrane. It catalyses the reaction all-trans-retinol + NADP(+) = all-trans-retinal + NADPH + H(+). Retinol dehydrogenase with a clear preference for NADP. Converts all-trans-retinal to all-trans-retinol. May play a role in the regeneration of visual pigment at high light intensity. This chain is Retinol dehydrogenase 8 (RDH8), found in Homo sapiens (Human).